The following is a 355-amino-acid chain: Uroporphyrinogen decarboxylase (355 aa).

Substrate contacts are provided by residues 27–31 (RQAGR), Phe46, Asp77, Tyr154, Thr209, and His328.

This sequence belongs to the uroporphyrinogen decarboxylase family. Homodimer.

It localises to the cytoplasm. The enzyme catalyses uroporphyrinogen III + 4 H(+) = coproporphyrinogen III + 4 CO2. It participates in porphyrin-containing compound metabolism; protoporphyrin-IX biosynthesis; coproporphyrinogen-III from 5-aminolevulinate: step 4/4. Catalyzes the decarboxylation of four acetate groups of uroporphyrinogen-III to yield coproporphyrinogen-III. This is Uroporphyrinogen decarboxylase from Vibrio vulnificus (strain CMCP6).